The primary structure comprises 369 residues: MARQQTKKNYSLRKLKTGTASVAVALTVLGAGFANQTEVRAEGVNATTSLTEKAKYDALKDENTGLRGDQTKLVKKLEEEQEKSKNLEKEKQKLENQALNFQDVIETQEKEKEDLKTTLAKATKENEISEASRKGLSRDLEASRAAKKELEAKHQKLEAENKKLTEANQVSEASRKGLSNDLEASRAAKKELEAKYQKLETDHQALEAKHQKLEADLPKFQRPSRKGLSRDLEASREANKKVTSELTQAKAQLSALEESKKLSEKEKAELQAKLDAQGKALKEQLAKQTEELAKLRAEKAAGSKTPATKPANKERSGRAAQTATRPSQNKGMRSQLPSTGEAANPFFTAAAATVMVSAGMLALKRKEEN.

Residues 1-41 (MARQQTKKNYSLRKLKTGTASVAVALTVLGAGFANQTEVRA) form the signal peptide. 3 C repeats span residues 120-154 (AKAT…EAKH), 162-196 (KKLT…EAKY), and 211-246 (QKLE…TSEL). Composition is skewed to basic and acidic residues over residues 125 to 165 (ENEI…KKLT), 202 to 219 (DHQA…DLPK), 228 to 243 (LSRD…KKVT), and 257 to 271 (EESK…AELQ). 2 disordered regions span residues 125–189 (ENEI…RAAK) and 202–271 (DHQA…AELQ). A 2 X repeats, type A region spans residues 129-200 (SEASRKGLSR…ELEAKYQKLE (72 aa)). The interval 132–241 (SRKGLSRDLE…LEASREANKK (110 aa)) is 3 X repeats, type B. 4 D repeats span residues 272-277 (AKLDAQ), 278-283 (GKALKE), 286-291 (AKQTEE), and 293-298 (AKLRAE). The segment covering 292–301 (LAKLRAEKAA) has biased composition (basic and acidic residues). The tract at residues 292–341 (LAKLRAEKAAGSKTPATKPANKERSGRAAQTATRPSQNKGMRSQLPSTGE) is disordered. Residues 319-338 (AAQTATRPSQNKGMRSQLPS) show a composition bias toward polar residues. The short motif at 336 to 340 (LPSTG) is the LPXTG sorting signal element. Thr339 is modified (pentaglycyl murein peptidoglycan amidated threonine). Residues 340-369 (GEAANPFFTAAAATVMVSAGMLALKRKEEN) constitute a propeptide, removed by sortase.

The protein belongs to the M protein family.

It is found in the secreted. It localises to the cell wall. The chain is Virulence factor-related M protein (ennX) from Streptococcus pyogenes serotype M49.